The following is a 227-amino-acid chain: Ribonuclease 3 (227 aa).

Residues 5-127 (LNALQLRLQH…LIGAVYLDAG (123 aa)) enclose the RNase III domain. A Mg(2+)-binding site is contributed by glutamate 40. Aspartate 44 is an active-site residue. 2 residues coordinate Mg(2+): aspartate 113 and glutamate 116. Glutamate 116 is a catalytic residue. A DRBM domain is found at 154–224 (DAKTALQEWL…ATAMLELLKA (71 aa)).

This sequence belongs to the ribonuclease III family. As to quaternary structure, homodimer. Requires Mg(2+) as cofactor.

It localises to the cytoplasm. The enzyme catalyses Endonucleolytic cleavage to 5'-phosphomonoester.. In terms of biological role, digests double-stranded RNA. Involved in the processing of primary rRNA transcript to yield the immediate precursors to the large and small rRNAs (23S and 16S). Processes some mRNAs, and tRNAs when they are encoded in the rRNA operon. Processes pre-crRNA and tracrRNA of type II CRISPR loci if present in the organism. The protein is Ribonuclease 3 of Delftia acidovorans (strain DSM 14801 / SPH-1).